Reading from the N-terminus, the 424-residue chain is Acetyl-CoA acetyltransferase, mitochondrial (424 aa).

A mitochondrion-targeting transit peptide spans 1 to 30; sequence MAALAVLHGVVRRPLLRGLLQEVRCLGRSY. The residue at position 63 (Lys63) is an N6-acetyllysine; alternate. Lys63 bears the N6-succinyllysine; alternate mark. Lys75 carries the N6-succinyllysine modification. Cys123 (acyl-thioester intermediate) is an active-site residue. Residues Lys171, Lys178, Lys187, and Lys199 each carry the N6-acetyllysine; alternate modification. An N6-succinyllysine; alternate mark is found at Lys171, Lys178, Lys187, and Lys199. Residue Ser204 is modified to Phosphoserine. Tyr216 contributes to the CoA binding site. Tyr216 is a K(+) binding site. Lys220 and Lys227 each carry N6-acetyllysine; alternate. Residues Lys220 and Lys227 each carry the N6-succinyllysine; alternate modification. Lys240 is modified (N6-succinyllysine). Lys242 carries the N6-acetyllysine; alternate modification. Lys242 carries the post-translational modification N6-succinyllysine; alternate. N6-acetyllysine is present on residues Lys248 and Lys254. Residues 255–257 and Lys260 each bind CoA; that span reads RVD. Position 260 is an N6-acetyllysine; alternate (Lys260). An N6-succinyllysine; alternate modification is found at Lys260. N6-succinyllysine occurs at positions 263 and 265. Lys270 is modified (N6-acetyllysine). Positions 277, 278, and 280 each coordinate K(+). Ser281 is a binding site for CoA. Lys335 is modified (N6-acetyllysine). Residue Val378 participates in K(+) binding. Cys410 functions as the Proton donor/acceptor in the catalytic mechanism.

This sequence belongs to the thiolase-like superfamily. Thiolase family. As to quaternary structure, homotetramer. Succinylation at Lys-265, adjacent to a coenzyme A binding site. Desuccinylated by SIRT5.

The protein localises to the mitochondrion. The enzyme catalyses 2 acetyl-CoA = acetoacetyl-CoA + CoA. It carries out the reaction propanoyl-CoA + acetyl-CoA = 2-methyl-3-oxobutanoyl-CoA + CoA. Its pathway is lipid metabolism; fatty acid beta-oxidation. Activated by potassium ions, but not sodium ions. Its function is as follows. This is one of the enzymes that catalyzes the last step of the mitochondrial beta-oxidation pathway, an aerobic process breaking down fatty acids into acetyl-CoA. Using free coenzyme A/CoA, catalyzes the thiolytic cleavage of medium- to long-chain 3-oxoacyl-CoAs into acetyl-CoA and a fatty acyl-CoA shortened by two carbon atoms. The activity of the enzyme is reversible and it can also catalyze the condensation of two acetyl-CoA molecules into acetoacetyl-CoA. Thereby, it plays a major role in ketone body metabolism. The protein is Acetyl-CoA acetyltransferase, mitochondrial (Acat1) of Rattus norvegicus (Rat).